Here is a 170-residue protein sequence, read N- to C-terminus: Viral interleukin-10 homolog (170 aa).

The first 23 residues, 1–23 (MERRLVVTLQCLVLLYLAPECGG), serve as a signal peptide directing secretion. Intrachain disulfides connect Cys27/Cys119 and Cys73/Cys125. Positions 97 to 145 (EAKDHVNSLGENLKTLRLRLRRCHRFLPCENKSKAVEQIKNAFNKLQEK) form a coiled coil. N-linked (GlcNAc...) asparagine; by host glycosylation occurs at Asn127.

Belongs to the IL-10 family. In terms of assembly, homodimer.

Its subcellular location is the secreted. Functionally, inhibits IFN-gamma synthesis. Down-regulates the expression of the host TAP1 gene (transporter associated with antigen processing), thereby affecting the transport of peptides into the endoplasmic reticulum and subsequent peptide loading by MHC class I molecules. In consequence, infected cells are masked for immune recognition by cytotoxic T-lymphocytes. The protein is Viral interleukin-10 homolog of Epstein-Barr virus (strain AG876) (HHV-4).